The primary structure comprises 85 residues: Large ribosomal subunit protein bL27 (85 aa).

This sequence belongs to the bacterial ribosomal protein bL27 family.

In Cellvibrio japonicus (strain Ueda107) (Pseudomonas fluorescens subsp. cellulosa), this protein is Large ribosomal subunit protein bL27.